A 288-amino-acid polypeptide reads, in one-letter code: Phosphatidylserine decarboxylase proenzyme (288 aa).

Residues Asp-88, His-145, and Ser-248 each act as charge relay system; for autoendoproteolytic cleavage activity in the active site. Ser-248 (schiff-base intermediate with substrate; via pyruvic acid; for decarboxylase activity) is an active-site residue. At Ser-248 the chain carries Pyruvic acid (Ser); by autocatalysis.

The protein belongs to the phosphatidylserine decarboxylase family. PSD-B subfamily. Prokaryotic type I sub-subfamily. As to quaternary structure, heterodimer of a large membrane-associated beta subunit and a small pyruvoyl-containing alpha subunit. Pyruvate serves as cofactor. In terms of processing, is synthesized initially as an inactive proenzyme. Formation of the active enzyme involves a self-maturation process in which the active site pyruvoyl group is generated from an internal serine residue via an autocatalytic post-translational modification. Two non-identical subunits are generated from the proenzyme in this reaction, and the pyruvate is formed at the N-terminus of the alpha chain, which is derived from the carboxyl end of the proenzyme. The autoendoproteolytic cleavage occurs by a canonical serine protease mechanism, in which the side chain hydroxyl group of the serine supplies its oxygen atom to form the C-terminus of the beta chain, while the remainder of the serine residue undergoes an oxidative deamination to produce ammonia and the pyruvoyl prosthetic group on the alpha chain. During this reaction, the Ser that is part of the protease active site of the proenzyme becomes the pyruvoyl prosthetic group, which constitutes an essential element of the active site of the mature decarboxylase.

Its subcellular location is the cell membrane. It carries out the reaction a 1,2-diacyl-sn-glycero-3-phospho-L-serine + H(+) = a 1,2-diacyl-sn-glycero-3-phosphoethanolamine + CO2. The protein operates within phospholipid metabolism; phosphatidylethanolamine biosynthesis; phosphatidylethanolamine from CDP-diacylglycerol: step 2/2. Functionally, catalyzes the formation of phosphatidylethanolamine (PtdEtn) from phosphatidylserine (PtdSer). The protein is Phosphatidylserine decarboxylase proenzyme of Azoarcus sp. (strain BH72).